The primary structure comprises 927 residues: UPF0182 protein bll7333 (927 aa).

Transmembrane regions (helical) follow at residues 17–37 (AVVG…LLAL), 65–85 (AVVF…NGWL), 134–154 (LALL…QFVY), 185–205 (WMML…LVHG), 220–240 (VIAH…WSFG), 264–284 (VGLP…LAAW), and 297–317 (AAFL…PVLF).

It belongs to the UPF0182 family.

The protein resides in the cell membrane. This is UPF0182 protein bll7333 from Bradyrhizobium diazoefficiens (strain JCM 10833 / BCRC 13528 / IAM 13628 / NBRC 14792 / USDA 110).